The primary structure comprises 189 residues: Protein Rex (189 aa).

A compositionally biased stretch (basic residues) spans 1 to 16; sequence MPKTRRRPRRSQRKRP. Positions 1–28 are disordered; it reads MPKTRRRPRRSQRKRPPTPWPTSQGLDR. The short motif at 2–18 is the Nuclear localization signal, and RNA-binding (RxRE) element; it reads PKTRRRPRRSQRKRPPT. The interval 56 to 70 is homomultimerization; sequence RPVYIVTPYWPPVQS. S70 is subject to Phosphoserine; by host. The short motif at 82–93 is the Nuclear export signal element; that stretch reads LSAQLYSSLSLD. Over residues 84-94 the composition is skewed to low complexity; it reads AQLYSSLSLDS. The interval 84–189 is disordered; that stretch reads AQLYSSLSLD…PPSPGPSCPT (106 aa). Over residues 111–125 the composition is skewed to pro residues; that stretch reads RRPPIQPPTFHPPSS. Positions 123–131 are homomultimerization; it reads PSSRPCANT. Over residues 127-164 the composition is skewed to polar residues; it reads PCANTPPSETDTWNPPLGSTSQPCLFQTPASGPKTCTP. T174 bears the Phosphothreonine; by host mark. S177 carries the phosphoserine; by host modification. A compositionally biased stretch (pro residues) spans 178 to 189; the sequence is FPPPSPGPSCPT.

It belongs to the deltaretrovirus Rex protein family. Homomultimer. Multimeric assembly is essential for activity and involves XPO1. Binds to human XPO1 and KPNB1. Interacts (via N-terminal nuclear localization signal) with human NPM1. Phosphorylated.

It is found in the host nucleus. The protein resides in the host nucleolus. It localises to the host cytoplasm. In terms of biological role, rex escorts unspliced gag-pro-pol and singly spliced env mRNAs out of the nucleus of infected cells. These mRNAs carry a recognition sequence called Rex responsive element (RxRE or XRE) located at the 3' region of the long terminal repeat (LTR). This function is essential since most HTLV proteins are translated from unspliced or partially spliced pre-mRNAs that cannot exit the nucleus by the pathway used by fully processed cellular mRNAs. Rex itself is translated from a fully spliced mRNA that probably readily exits the nucleus. Rex's nuclear localization signal (NLS) binds directly to KPNB1/importin beta-1 without previous binding to KPNA1/importin alpha-1. KPNB1 binds to the GDP bound form of RAN (Ran-GDP) and targets Rex to the nucleus. In the nucleus, the conversion from Ran-GDP to Ran-GTP dissociates Rex from KPNB1 and allows Rex's binding to the RRE in viral pre-mRNAs. Rex multimerizes on the RRE via cooperative assembly. This multimerization is critical for its full biological activity, since it may shield the viral RNA from being spliced or down-regulated, and probably exposes Rex's nuclear export signal (NES) to the surface. Rex can then form a complex with XPO1/CRM1, RANBP3 and Ran-GTP, leading to nuclear export of the complex. Conversion from Ran-GTP to Ran-GDP mediates dissociation of the Rex/RRE/XPO1/RANBP3/RAN complex, so that Rex can return to the nucleus for a subsequent round of export. This chain is Protein Rex, found in Homo sapiens (Human).